Reading from the N-terminus, the 95-residue chain is uncharacterized protein (95 aa).

This is an uncharacterized protein from Human adenovirus B serotype 7 (HAdV-7).